A 581-amino-acid polypeptide reads, in one-letter code: Arginine--tRNA ligase (581 aa).

The 'HIGH' region motif lies at 126 to 136 (PNLAKEMHVGH).

This sequence belongs to the class-I aminoacyl-tRNA synthetase family. As to quaternary structure, monomer.

The protein resides in the cytoplasm. The enzyme catalyses tRNA(Arg) + L-arginine + ATP = L-arginyl-tRNA(Arg) + AMP + diphosphate. The polypeptide is Arginine--tRNA ligase (Shewanella denitrificans (strain OS217 / ATCC BAA-1090 / DSM 15013)).